A 495-amino-acid chain; its full sequence is MSFEIIAKDLAGRVGKLYTKSGVIETPALFPVVDPRKQELPSAVIERYFGQIITNAYFVYRLTGGRAVDIKKVLSWNAVLMTDSGAYQILRYGSVEVDPDEILQFQARIGSDIGVILDLPFDYEEPYESALLKVEETIRRAKRASAMLDKLEDMLVVGPIQGGLYLDLLATSAREISKLGFHIFAVGSPTTLLEEYRFDLLLEVILHVKANILREAPLHLFGAGHPLVLPFAVALGVDLFDSASYILYARDDRIMLRDRTLRLEDVKTDYLPCSTKLCHKPVKELREMPHEERIQLIAEHNLAILREELLEIKQRIHEGTLWEYLEIKARAHPTLYRFLRSLGRYKRLIEEYDPETHPETHGLFFYQDTAESRPEPHRHWSRTANLYTPSKVAIVIRAGEKPYNKSWEYRYLKSLVGDRAHVLFYDPVFGLVPEEVAEIYPLSQNEAEGESEAARAFAYEWLNNYDVILLYRVDLPMLSKKVIPLRSLDDVLHYI.

Residue Asp-83 is the Nucleophile of the active site. Residue Asp-118 participates in substrate binding. Zn(2+) contacts are provided by Cys-273 and Cys-278.

Belongs to the archaeosine tRNA-ribosyltransferase family. It depends on Zn(2+) as a cofactor.

It catalyses the reaction guanosine(15) in tRNA + 7-cyano-7-deazaguanine = 7-cyano-7-carbaguanosine(15) in tRNA + guanine. The protein operates within tRNA modification; archaeosine-tRNA biosynthesis. Its function is as follows. Exchanges the guanine residue with 7-cyano-7-deazaguanine (preQ0) at position 15 in the dihydrouridine loop (D-loop) of archaeal tRNAs. This chain is tRNA-guanine(15) transglycosylase, found in Pyrobaculum aerophilum (strain ATCC 51768 / DSM 7523 / JCM 9630 / CIP 104966 / NBRC 100827 / IM2).